The following is a 303-amino-acid chain: Probable cell division protein WhiA (303 aa).

Residues 272–303 (SIQQIADSLETPLSKSGVNHRLRKINKIADEL) constitute a DNA-binding region (H-T-H motif).

Belongs to the WhiA family.

In terms of biological role, involved in cell division and chromosome segregation. This Streptococcus agalactiae serotype Ia (strain ATCC 27591 / A909 / CDC SS700) protein is Probable cell division protein WhiA.